A 116-amino-acid chain; its full sequence is U30-theraphotoxin-Cg1b (116 aa).

The N-terminal stretch at 1-17 (MKLCVLTIATLLVTATS) is a signal peptide. Positions 18–53 (LETQKEIAEGNELTREETPSLVEHKEDEAAAASEKR) are excised as a propeptide. The interval 25 to 45 (AEGNELTREETPSLVEHKEDE) is disordered. 4 cysteine pairs are disulfide-bonded: C55–C69, C62–C75, C66–C112, and C68–C88.

It belongs to the neurotoxin 03 (Tx2) family. 02 subfamily. As to expression, expressed by the venom gland.

It is found in the secreted. Functionally, probable ion channel inhibitor. The protein is U30-theraphotoxin-Cg1b of Chilobrachys guangxiensis (Chinese earth tiger tarantula).